The primary structure comprises 545 residues: T-box transcription factor TBX4 (545 aa).

The segment at residues 71–251 (LHEKELWKKF…NNPFAKGFRG (181 aa)) is a DNA-binding region (T-box). The tract at residues 479–509 (QSQVRERGPSASFPRERGLPQGCERKPPSPH) is disordered. Residues 482 to 505 (VRERGPSASFPRERGLPQGCERKP) are compositionally biased toward basic and acidic residues. Ser507 is subject to Phosphoserine.

The protein resides in the nucleus. Its function is as follows. Transcriptional regulator that has an essential role in the organogenesis of lungs, pelvis, and hindlimbs. The polypeptide is T-box transcription factor TBX4 (TBX4) (Homo sapiens (Human)).